A 537-amino-acid polypeptide reads, in one-letter code: Probable metalloreductase AIM14 (537 aa).

7 helical membrane passes run 20–40, 58–78, 95–112, 133–155, 167–187, 194–216, and 221–238; these read GFFI…VKFI, ITNP…IFTG, RYGR…YLVL, KWTS…YKWI, FLNL…IISI, VYST…ITFH, and VTVF…QLYL. One can recognise a Ferric oxidoreductase domain in the interval 97–213; that stretch reads GRMAYCLIPL…VTAWSMVILI (117 aa). Positions 187-363 constitute an FAD-binding FR-type domain; sequence IRPFRRKVYS…GGSGISLGLP (177 aa). The interval 432–475 is disordered; it reads EEQGHGLLNNDNENGIELQNMPKTNEESSEANSTNSKNNKDNQE.

This sequence belongs to the ferric reductase (FRE) family. AIM14 subfamily.

The protein resides in the membrane. Probable cell surface metalloreductase. May be involved in iron or copper homeostasis. This chain is Probable metalloreductase AIM14 (AIM14), found in Candida dubliniensis (strain CD36 / ATCC MYA-646 / CBS 7987 / NCPF 3949 / NRRL Y-17841) (Yeast).